The primary structure comprises 89 residues: Mitochondrial import inner membrane translocase subunit Tim9 (89 aa).

Residue A2 is modified to N-acetylalanine. The Twin CX3C motif signature appears at 28–52; sequence CFLDCVKDFTTREVKPEEVTCSEHC. 2 cysteine pairs are disulfide-bonded: C28–C52 and C32–C48.

It belongs to the small Tim family. As to quaternary structure, heterohexamer; composed of 3 copies of TIMM9 and 3 copies of TIMM10/TIM10A, named soluble 70 kDa complex. The complex forms a 6-bladed alpha-propeller structure and associates with the TIMM22 component of the TIM22 complex. Interacts with multi-pass transmembrane proteins in transit. Also forms a complex composed of TIMM9, TIMM10/TIM10A and FXC1/TIM10B.

It is found in the mitochondrion inner membrane. Mitochondrial intermembrane chaperone that participates in the import and insertion of multi-pass transmembrane proteins into the mitochondrial inner membrane. May also be required for the transfer of beta-barrel precursors from the TOM complex to the sorting and assembly machinery (SAM complex) of the outer membrane. Acts as a chaperone-like protein that protects the hydrophobic precursors from aggregation and guide them through the mitochondrial intermembrane space. This Rattus norvegicus (Rat) protein is Mitochondrial import inner membrane translocase subunit Tim9 (Timm9).